The primary structure comprises 157 residues: 6,7-dimethyl-8-ribityllumazine synthase (157 aa).

Residues phenylalanine 24, 56–58 (SFE), and 79–81 (VLI) each bind 5-amino-6-(D-ribitylamino)uracil. 84 to 85 (ET) lines the (2S)-2-hydroxy-3-oxobutyl phosphate pocket. Residue histidine 87 is the Proton donor of the active site. Phenylalanine 112 serves as a coordination point for 5-amino-6-(D-ribitylamino)uracil. Position 126 (arginine 126) interacts with (2S)-2-hydroxy-3-oxobutyl phosphate.

Belongs to the DMRL synthase family.

The enzyme catalyses (2S)-2-hydroxy-3-oxobutyl phosphate + 5-amino-6-(D-ribitylamino)uracil = 6,7-dimethyl-8-(1-D-ribityl)lumazine + phosphate + 2 H2O + H(+). The protein operates within cofactor biosynthesis; riboflavin biosynthesis; riboflavin from 2-hydroxy-3-oxobutyl phosphate and 5-amino-6-(D-ribitylamino)uracil: step 1/2. Catalyzes the formation of 6,7-dimethyl-8-ribityllumazine by condensation of 5-amino-6-(D-ribitylamino)uracil with 3,4-dihydroxy-2-butanone 4-phosphate. This is the penultimate step in the biosynthesis of riboflavin. The chain is 6,7-dimethyl-8-ribityllumazine synthase from Pyrococcus furiosus (strain ATCC 43587 / DSM 3638 / JCM 8422 / Vc1).